We begin with the raw amino-acid sequence, 104 residues long: Ig lambda-2 chain C region (104 aa).

In terms of domain architecture, Ig-like spans 6 to 99 (PTLTVFPPSS…EGDTVEKSLS (94 aa)). The cysteines at positions 27 and 85 are disulfide-linked.

This is Ig lambda-2 chain C region (Iglc2) from Mus musculus (Mouse).